The chain runs to 617 residues: Probable Xaa-Pro aminopeptidase P (617 aa).

Positions 414, 425, 523, and 537 each coordinate Mn(2+).

It belongs to the peptidase M24B family. It depends on Mn(2+) as a cofactor.

The catalysed reaction is Release of any N-terminal amino acid, including proline, that is linked to proline, even from a dipeptide or tripeptide.. Catalyzes the removal of a penultimate prolyl residue from the N-termini of peptides. In Blastomyces gilchristii (strain SLH14081) (Blastomyces dermatitidis), this protein is Probable Xaa-Pro aminopeptidase P (AMPP).